Reading from the N-terminus, the 275-residue chain is 2,3,4,5-tetrahydropyridine-2,6-dicarboxylate N-succinyltransferase (275 aa).

Positions 104 and 141 each coordinate substrate.

It belongs to the transferase hexapeptide repeat family. Homotrimer.

It is found in the cytoplasm. The catalysed reaction is (S)-2,3,4,5-tetrahydrodipicolinate + succinyl-CoA + H2O = (S)-2-succinylamino-6-oxoheptanedioate + CoA. Its pathway is amino-acid biosynthesis; L-lysine biosynthesis via DAP pathway; LL-2,6-diaminopimelate from (S)-tetrahydrodipicolinate (succinylase route): step 1/3. The sequence is that of 2,3,4,5-tetrahydropyridine-2,6-dicarboxylate N-succinyltransferase from Mannheimia succiniciproducens (strain KCTC 0769BP / MBEL55E).